Here is a 106-residue protein sequence, read N- to C-terminus: Large ribosomal subunit protein uL24 (106 aa).

The protein belongs to the universal ribosomal protein uL24 family. Part of the 50S ribosomal subunit.

Functionally, one of two assembly initiator proteins, it binds directly to the 5'-end of the 23S rRNA, where it nucleates assembly of the 50S subunit. One of the proteins that surrounds the polypeptide exit tunnel on the outside of the subunit. The polypeptide is Large ribosomal subunit protein uL24 (Paramagnetospirillum magneticum (strain ATCC 700264 / AMB-1) (Magnetospirillum magneticum)).